The primary structure comprises 307 residues: tRNA dimethylallyltransferase 1 (307 aa).

10–17 provides a ligand contact to ATP; that stretch reads GPTASGKT. 12–17 contributes to the substrate binding site; it reads TASGKT. The segment at 35–38 is interaction with substrate tRNA; that stretch reads DSRQ.

It belongs to the IPP transferase family. As to quaternary structure, monomer. Requires Mg(2+) as cofactor.

It carries out the reaction adenosine(37) in tRNA + dimethylallyl diphosphate = N(6)-dimethylallyladenosine(37) in tRNA + diphosphate. Functionally, catalyzes the transfer of a dimethylallyl group onto the adenine at position 37 in tRNAs that read codons beginning with uridine, leading to the formation of N6-(dimethylallyl)adenosine (i(6)A). This Geotalea daltonii (strain DSM 22248 / JCM 15807 / FRC-32) (Geobacter daltonii) protein is tRNA dimethylallyltransferase 1.